The following is a 368-amino-acid chain: Phospho-N-acetylmuramoyl-pentapeptide-transferase (368 aa).

The next 10 helical transmembrane spans lie at 34–54, 79–99, 102–122, 140–160, 176–196, 207–227, 247–267, 271–291, 296–316, and 345–365; these read GAVV…IDHL, TPTM…VLWA, LNPY…VGFY, ARIL…VRLG, LVIK…VGAG, GLAI…AYLA, LAVL…FNAP, IFMG…IAVA, IVLA…IVQV, and QIVI…LSTL.

The protein belongs to the glycosyltransferase 4 family. MraY subfamily. The cofactor is Mg(2+).

Its subcellular location is the cell inner membrane. It carries out the reaction UDP-N-acetyl-alpha-D-muramoyl-L-alanyl-gamma-D-glutamyl-meso-2,6-diaminopimeloyl-D-alanyl-D-alanine + di-trans,octa-cis-undecaprenyl phosphate = di-trans,octa-cis-undecaprenyl diphospho-N-acetyl-alpha-D-muramoyl-L-alanyl-D-glutamyl-meso-2,6-diaminopimeloyl-D-alanyl-D-alanine + UMP. The protein operates within cell wall biogenesis; peptidoglycan biosynthesis. Catalyzes the initial step of the lipid cycle reactions in the biosynthesis of the cell wall peptidoglycan: transfers peptidoglycan precursor phospho-MurNAc-pentapeptide from UDP-MurNAc-pentapeptide onto the lipid carrier undecaprenyl phosphate, yielding undecaprenyl-pyrophosphoryl-MurNAc-pentapeptide, known as lipid I. The chain is Phospho-N-acetylmuramoyl-pentapeptide-transferase from Bradyrhizobium sp. (strain BTAi1 / ATCC BAA-1182).